Reading from the N-terminus, the 2149-residue chain is Non-reducing polyketide synthase PvBS090_009107 (2149 aa).

Residues 8–244 (YLFGDQTGEF…VRVPVHAPYH (237 aa)) are N-terminal acylcarrier protein transacylase domain (SAT). The region spanning 375 to 806 (QSKIAIIGLS…GGNTALLIED (432 aa)) is the Ketosynthase family 3 (KS3) domain. Catalysis depends on for beta-ketoacyl synthase activity residues cysteine 547, histidine 682, and histidine 724. A malonyl-CoA:ACP transacylase (MAT) domain region spans residues 911 to 1231 (FVFTGQGAQY…LSAIYLAGVD (321 aa)). Residue serine 1000 is the For acyl/malonyl transferase activity of the active site. Positions 1290-1604 (TTSVQRIVET…RQVLNTVLPP (315 aa)) are product template (PT) domain. The N-terminal hotdog fold stretch occupies residues 1294–1426 (QRIVETRDEG…CLVKFSDTHL (133 aa)). Residues 1294 to 1599 (QRIVETRDEG…FQGVPRQVLN (306 aa)) enclose the PKS/mFAS DH domain. Residue histidine 1326 is the Proton acceptor; for dehydratase activity of the active site. Positions 1454-1599 (SHRMHRGMFY…FQGVPRQVLN (146 aa)) are C-terminal hotdog fold. The active-site Proton donor; for dehydratase activity is the aspartate 1512. Residues 1604 to 1631 (PAGGSKAAPRTTARAVPPPPINVEKPKS) are disordered. The Carrier 1 domain occupies 1649–1726 (SAGPSVLVQA…DLKQLLSQAS (78 aa)). Position 1686 is an O-(pantetheine 4'-phosphoryl)serine (serine 1686). Composition is skewed to low complexity over residues 1722–1731 (LSQASPSDSS) and 1744–1755 (SSSTEPSTPGTP). A disordered region spans residues 1722-1763 (LSQASPSDSSDSSEESHYSFRDSSSTEPSTPGTPAFFSPKRG). One can recognise a Carrier 2 domain in the interval 1769-1846 (VGESETIKTI…AVETALDLKP (78 aa)). Serine 1806 bears the O-(pantetheine 4'-phosphoryl)serine mark. The thioesterase (TE) domain stretch occupies residues 1875–2147 (STHPPATSIL…KLSAFIGRAM (273 aa)). Serine 1965 (for thioesterase activity) is an active-site residue.

The enzyme catalyses 6 malonyl-CoA + acetyl-CoA + 6 H(+) = naphtopyrone YWA1 + 6 CO2 + 7 CoA + H2O. Its pathway is secondary metabolite biosynthesis. It functions in the pathway pigment biosynthesis. Non-reducing polyketide synthase; part of the gene cluster 24 that mediates the biosynthesis of a pigment with an aromatic structure protecting the pigmented fungus from both ionizing and non-ionizing radiations based on a mechanism similar to melanin, that is, free radical quenching and spherical spatial arrangement. Catalyzes the biosynthesis of the gamma-naphthopyrone precursor YWA1, via condensation of one acetyl-CoA starter unit with 6 malonyl-CoA units. YWA1 is probably further processed by the additional enzymes present within the cluster 24, however these additional steps have not been characterized yet. YWA1 is not converted to DHN-melanin in Byssochlamys spectabilis since the use of the DHN-melanin pathway inhibitor pyroquilon does not result in a loss of pigmentation. This Byssochlamys spectabilis (Paecilomyces variotii) protein is Non-reducing polyketide synthase PvBS090_009107.